The following is a 1616-amino-acid chain: Protein P200 (1616 aa).

Disordered regions lie at residues 1–41 (MPKT…DKVE), 878–909 (HFQP…QAEF), 931–975 (QQLE…LDQN), 1004–1083 (DNVE…EPVD), 1100–1132 (FDKN…TVGE), and 1159–1433 (ISEP…SEEE). The segment at 891 to 1389 (EAKFDSPVEI…QEAKFDSPVE (499 aa)) is 2 X 26 AA repeats. Positions 938–952 (EETVVTPTEVTAFEP) are enriched in low complexity. 2 stretches are compositionally biased toward basic and acidic residues: residues 1012 to 1029 (QPKE…KELQ) and 1059 to 1081 (VFEK…KSEP). Repeat copies occupy residues 1161 to 1186 (EPQV…SPVE) and 1205 to 1236 (EIQP…SPVE). Polar residues-rich tracts occupy residues 1200–1227 (VQTQ…QTPQ) and 1242–1251 (EFSSEPTQQH). The tract at residues 1205-1389 (EIQPVESQPE…QEAKFDSPVE (185 aa)) is 2 X 32 AA repeats. Positions 1256-1270 (ASFDEPNYDFDEPNY) are enriched in acidic residues. The span at 1276 to 1285 (SYDSDLQPSE) shows a compositional bias: polar residues. A compositionally biased stretch (acidic residues) spans 1288-1302 (YDVDEPNYDFDEPNY). The segment covering 1309-1323 (SEPQFEPQVEQQPGE) has biased composition (low complexity). 2 tandem repeats follow at residues 1310–1339 (EPQF…SPVE) and 1358–1389 (EIQP…SPVE). Residues 1353–1380 (VQTQPEIQPVESQPEATFDTVQPEQTPQ) show a composition bias toward polar residues. Positions 1392–1406 (QEPQVSSEPEVVVQP) are enriched in low complexity. Residues 1416-1433 (VLEEPQADEIQPEASEEE) show a composition bias toward acidic residues.

Could be an accessory structural component in cytadherence. The polypeptide is Protein P200 (Mycoplasma genitalium (strain ATCC 33530 / DSM 19775 / NCTC 10195 / G37) (Mycoplasmoides genitalium)).